We begin with the raw amino-acid sequence, 549 residues long: Pleckstrin homology domain-containing family A member 8 (549 aa).

A PH domain is found at 1–93 (MEGVLYKWTN…WLVALGTAKA (93 aa)). Disordered stretches follow at residues 180–245 (NPDL…ENIS) and 257–312 (QNDL…QEVQ). A compositionally biased stretch (basic and acidic residues) spans 203-219 (KSNDPKNLHPGETRKDL). Residues 276 to 288 (EPVEEQQTDGSTE) show a composition bias toward acidic residues. The span at 299–309 (EVSMSPTQNKQ) shows a compositional bias: polar residues.

It is found in the cytoplasm. It localises to the golgi apparatus. The protein localises to the trans-Golgi network membrane. The protein resides in the membrane. In terms of biological role, cargo transport protein that is required for apical transport from the trans-Golgi network (TGN) to the plasma membrane. The chain is Pleckstrin homology domain-containing family A member 8 (plekha8) from Danio rerio (Zebrafish).